The following is a 935-amino-acid chain: Pre-mRNA-splicing factor CWC22 homolog (935 aa).

Positions 1–179 (MSRSPSPDSP…PKDLLRTRTG (179 aa)) are disordered. Basic and acidic residues-rich tracts occupy residues 13 to 25 (VRDD…REQS) and 49 to 70 (ESSR…DEKM). Residues 84 to 148 (QHRRHRESRS…RSPARRRSPV (65 aa)) are compositionally biased toward basic residues. The segment covering 159-175 (PTEEPEKKKNDPKDLLR) has biased composition (basic and acidic residues). Positions 212–400 (KKKIHGLVNR…ETAMQIRKDK (189 aa)) constitute an MIF4G domain. Residues 463 to 489 (ADISSDEEEEVEDDDEESEAEEAPRKT) are disordered. Over residues 465-483 (ISSDEEEEVEDDDEESEAE) the composition is skewed to acidic residues. The region spanning 502–633 (AFRREVYLTL…EWKILADVKM (132 aa)) is the MI domain. The segment at 725 to 935 (KAAQSSSDSS…VGSDDRRRRH (211 aa)) is disordered. The span at 729–763 (SSSDSSSDSSDSSDSSDSSGSSDSSDDSSSSSSSD) shows a compositional bias: low complexity. Composition is skewed to basic and acidic residues over residues 780–891 (KKKE…DRKE) and 897–935 (DRRD…RRRH).

This sequence belongs to the CWC22 family.

Its subcellular location is the nucleus. It is found in the nucleus speckle. Required for early embryogenesis and tissue differentiation. Required for pre-mRNA splicing and for exon-junction complex (EJC) assembly. Hinders EIF4A3 from non-specifically binding RNA and escorts it to the splicing machinery to promote EJC assembly on mature mRNAs. Through its role in EJC assembly, required for nonsense-mediated mRNA decay. The sequence is that of Pre-mRNA-splicing factor CWC22 homolog from Caenorhabditis briggsae.